The primary structure comprises 217 residues: MNLILLGPPGAGKGTQAKLLIKRFQIPQISTGDILRAAVSEMTPMGVKAKGYMESGALVPDEVVVGIVRERLEKNDCLNGFILDGFPRTVAQADALKHMLVCMNMSIEHVVSMAVDKEELLQRITGRRTCRLCGKGYHVVFDPPRVSGRCDECLGELFQRDDDQEETMRKRLDVYEDQTAPLITYYENESLLRSIAGVGSIDDIQQRILSIIQGTHG.

10–15 (GAGKGT) provides a ligand contact to ATP. Positions 30–59 (STGDILRAAVSEMTPMGVKAKGYMESGALV) are NMP. AMP-binding positions include T31, R36, 57–59 (ALV), 85–88 (GFPR), and Q92. The tract at residues 126 to 163 (GRRTCRLCGKGYHVVFDPPRVSGRCDECLGELFQRDDD) is LID. ATP is bound at residue R127. Zn(2+) contacts are provided by C130, C133, C150, and C153. AMP-binding residues include R160 and R171. Residue G199 coordinates ATP.

It belongs to the adenylate kinase family. As to quaternary structure, monomer.

It localises to the cytoplasm. It carries out the reaction AMP + ATP = 2 ADP. It functions in the pathway purine metabolism; AMP biosynthesis via salvage pathway; AMP from ADP: step 1/1. In terms of biological role, catalyzes the reversible transfer of the terminal phosphate group between ATP and AMP. Plays an important role in cellular energy homeostasis and in adenine nucleotide metabolism. This is Adenylate kinase from Geotalea uraniireducens (strain Rf4) (Geobacter uraniireducens).